A 293-amino-acid polypeptide reads, in one-letter code: Protease HtpX (293 aa).

Transmembrane regions (helical) follow at residues 2–22 (FRILLFLATNIAVVLVASVTL) and 38–58 (LTSLLIFCAVFGMSGAMISLF). Residue His145 participates in Zn(2+) binding. Glu146 is an active-site residue. Residue His149 participates in Zn(2+) binding. Helical transmembrane passes span 156 to 176 (VTLALIQGVINTFVMFFARII) and 193 to 213 (IGFFITTIFAEIVLGILASII). Glu222 serves as a coordination point for Zn(2+).

This sequence belongs to the peptidase M48B family. Zn(2+) serves as cofactor.

It is found in the cell inner membrane. The polypeptide is Protease HtpX (Hahella chejuensis (strain KCTC 2396)).